A 203-amino-acid chain; its full sequence is MGAEKITSKIVEDANKNAEKILAEALNEKEAILTEAKEEASKKEQAIAKKGEKDAEMTKNRILAEARLSAKKKLLEEREKTIQLTLEKLEEDLVKLPQKDEYKDTLLKLIISGVYSVGGGELELLLNKKDFEVIDDSTLWALEKEMEDRLKKVTVLKKGEAKSIIGGCIIKTADHTKVSDNSLEATFERNLDSVRAKIAEMLF.

It belongs to the V-ATPase E subunit family. As to quaternary structure, has multiple subunits with at least A(3), B(3), C, D, E, F, H, I and proteolipid K(x).

It localises to the cell membrane. Its function is as follows. Component of the A-type ATP synthase that produces ATP from ADP in the presence of a proton gradient across the membrane. This chain is A-type ATP synthase subunit E, found in Methanococcus maripaludis (strain C6 / ATCC BAA-1332).